The chain runs to 127 residues: DNA-directed RNA polymerase subunit omega (127 aa).

It belongs to the RNA polymerase subunit omega family. The RNAP catalytic core consists of 2 alpha, 1 beta, 1 beta' and 1 omega subunit. When a sigma factor is associated with the core the holoenzyme is formed, which can initiate transcription.

It carries out the reaction RNA(n) + a ribonucleoside 5'-triphosphate = RNA(n+1) + diphosphate. Promotes RNA polymerase assembly. Latches the N- and C-terminal regions of the beta' subunit thereby facilitating its interaction with the beta and alpha subunits. The chain is DNA-directed RNA polymerase subunit omega from Rickettsia canadensis (strain McKiel).